The following is a 140-amino-acid chain: uncharacterized protein (140 aa).

This sequence belongs to the MG439/MG440 family.

This is an uncharacterized protein from Mycoplasma pneumoniae (strain ATCC 29342 / M129 / Subtype 1) (Mycoplasmoides pneumoniae).